We begin with the raw amino-acid sequence, 721 residues long: Mitogen-activated protein kinase 6 (721 aa).

Methionine 1 participates in a covalent cross-link: Peptide (Met-Gly) (interchain with G-Cter in ubiquitin). The 297-residue stretch at 20-316 folds into the Protein kinase domain; sequence YMDLKPLGCG…AEEALSHPYM (297 aa). Residues 26–34 and lysine 49 each bind ATP; that span reads LGCGGNGLV. Aspartate 152 acts as the Proton acceptor in catalysis. A Phosphoserine; by PAK1, PAK2 and PAK3 modification is found at serine 189. The SEG motif signature appears at 189 to 191; that stretch reads SEG. Residues 332–337 carry the FRIEDE motif motif; that stretch reads FHIEDE. Serine 386, serine 452, serine 556, serine 558, serine 665, and serine 684 each carry phosphoserine. Polar residues predominate over residues 701–715; that stretch reads AMKSSPQIPHQTYSS. Positions 701–721 are disordered; the sequence is AMKSSPQIPHQTYSSILKHLN.

This sequence belongs to the protein kinase superfamily. CMGC Ser/Thr protein kinase family. MAP kinase subfamily. As to quaternary structure, heterodimer with ERK4/MAPK4. Interacts with (via FRIEDE motif) MAPKAPK5. Interacts with UBE3A; this interaction may be indirect and mediated by HERC2, possibly via HERC2 interaction with NEURL4. Mg(2+) is required as a cofactor. Post-translationally, phosphorylated at Ser-189 by PAK1, PAK2 and PAK3 resulting in catalytic activation. Phosphorylated by MAPKAPK5 at other sites. In terms of processing, ubiquitination at Met-1 leads to degradation by the proteasome pathway. In terms of tissue distribution, highest expression in the skeletal muscle, followed by the brain. Also found in heart, placenta, lung, liver, pancreas, kidney and skin fibroblasts.

It is found in the cytoplasm. Its subcellular location is the nucleus. The catalysed reaction is L-seryl-[protein] + ATP = O-phospho-L-seryl-[protein] + ADP + H(+). It carries out the reaction L-threonyl-[protein] + ATP = O-phospho-L-threonyl-[protein] + ADP + H(+). Its activity is regulated as follows. Activated by phosphorylation at Ser-189. Atypical MAPK protein. Phosphorylates microtubule-associated protein 2 (MAP2) and MAPKAPK5. The precise role of the complex formed with MAPKAPK5 is still unclear, but the complex follows a complex set of phosphorylation events: upon interaction with atypical MAPKAPK5, ERK3/MAPK6 is phosphorylated at Ser-189 and then mediates phosphorylation and activation of MAPKAPK5, which in turn phosphorylates ERK3/MAPK6. May promote entry in the cell cycle. The polypeptide is Mitogen-activated protein kinase 6 (MAPK6) (Homo sapiens (Human)).